A 469-amino-acid chain; its full sequence is Coiled-coil domain-containing protein 6 (469 aa).

Positions M1–T10 are enriched in acidic residues. Residues M1 to G37 form a disordered region. N-acetylalanine is present on A2. A Phosphoserine modification is found at S45. A coiled-coil region spans residues F47 to S320. 3 repeat units span residues E99–Y127, E128–L156, and E157–L185. The segment at E99–L228 is 5 X 29 AA tandem repeats. The stretch at E186 to L199 is one 4; approximate repeat. Residues E200–L228 form repeat 5. S233, S237, S242, S247, S277, and S316 each carry phosphoserine. The tract at residues A335–G362 is disordered. T342 carries the phosphothreonine modification. A compositionally biased stretch (low complexity) spans S344–P361. A phosphoserine mark is found at S356 and S360. R380 carries the omega-N-methylarginine modification. Phosphoserine occurs at positions 388 and 406. The interval Q394–P469 is disordered. Over residues P419–P444 the composition is skewed to pro residues. The SH3-binding motif lies at P435–P444. Over residues Q460 to P469 the composition is skewed to low complexity.

It is found in the cytoplasm. Its subcellular location is the cytoskeleton. This chain is Coiled-coil domain-containing protein 6 (Ccdc6), found in Mus musculus (Mouse).